The primary structure comprises 491 residues: Cytochrome P450 2F5 (491 aa).

Residue Cys-436 participates in heme binding.

This sequence belongs to the cytochrome P450 family. The cofactor is heme.

Its subcellular location is the endoplasmic reticulum membrane. The protein localises to the microsome membrane. The enzyme catalyses an organic molecule + reduced [NADPH--hemoprotein reductase] + O2 = an alcohol + oxidized [NADPH--hemoprotein reductase] + H2O + H(+). Its function is as follows. Cytochromes P450 are a group of heme-thiolate monooxygenases. In liver microsomes, this enzyme is involved in an NADPH-dependent electron transport pathway. It oxidizes a variety of structurally unrelated compounds, including steroids, fatty acids, and xenobiotics. The sequence is that of Cytochrome P450 2F5 (CYP2F5) from Gorilla gorilla gorilla (Western lowland gorilla).